Consider the following 294-residue polypeptide: 33 kDa chaperonin (294 aa).

Cystine bridges form between Cys-238–Cys-240 and Cys-271–Cys-274.

It belongs to the HSP33 family. Post-translationally, under oxidizing conditions two disulfide bonds are formed involving the reactive cysteines. Under reducing conditions zinc is bound to the reactive cysteines and the protein is inactive.

It is found in the cytoplasm. In terms of biological role, redox regulated molecular chaperone. Protects both thermally unfolding and oxidatively damaged proteins from irreversible aggregation. Plays an important role in the bacterial defense system toward oxidative stress. The chain is 33 kDa chaperonin from Clostridium tetani (strain Massachusetts / E88).